Here is a 219-residue protein sequence, read N- to C-terminus: UPF0376 protein C36C5.12 (219 aa).

Residues 1-20 lie on the Cytoplasmic side of the membrane; it reads MGRLDVKNSWIEFHQDEMTS. The helical; Signal-anchor for type II membrane protein transmembrane segment at 21–43 threads the bilayer; it reads FLKLAIIGTVLLGVAHGANLTAA. Residues 44–219 are Extracellular-facing; that stretch reads EKETYCELRS…VSKCDFSRLG (176 aa). Residues Asn-104 and Asn-204 are each glycosylated (N-linked (GlcNAc...) asparagine).

The protein belongs to the UPF0376 family.

The protein localises to the membrane. This is UPF0376 protein C36C5.12 from Caenorhabditis elegans.